The primary structure comprises 301 residues: Elongation factor Ts (301 aa).

Positions 82-85 (TDFV) are involved in Mg(2+) ion dislocation from EF-Tu.

Belongs to the EF-Ts family.

It is found in the cytoplasm. Its function is as follows. Associates with the EF-Tu.GDP complex and induces the exchange of GDP to GTP. It remains bound to the aminoacyl-tRNA.EF-Tu.GTP complex up to the GTP hydrolysis stage on the ribosome. This chain is Elongation factor Ts, found in Hyphomonas neptunium (strain ATCC 15444).